A 278-amino-acid chain; its full sequence is 4-deoxy-L-threo-5-hexosulose-uronate ketol-isomerase (278 aa).

Positions 196, 198, 203, and 245 each coordinate Zn(2+).

Belongs to the KduI family. Requires Zn(2+) as cofactor.

The enzyme catalyses 5-dehydro-4-deoxy-D-glucuronate = 3-deoxy-D-glycero-2,5-hexodiulosonate. The protein operates within glycan metabolism; pectin degradation; 2-dehydro-3-deoxy-D-gluconate from pectin: step 4/5. In terms of biological role, catalyzes the isomerization of 5-dehydro-4-deoxy-D-glucuronate to 3-deoxy-D-glycero-2,5-hexodiulosonate. The protein is 4-deoxy-L-threo-5-hexosulose-uronate ketol-isomerase of Enterobacter sp. (strain 638).